We begin with the raw amino-acid sequence, 43 residues long: Oxygen-evolving enhancer protein 2 (43 aa).

It belongs to the PsbP family.

It localises to the plastid. The protein localises to the chloroplast thylakoid membrane. In terms of biological role, may be involved in the regulation of photosystem II. The chain is Oxygen-evolving enhancer protein 2 from Physcomitrium patens (Spreading-leaved earth moss).